A 201-amino-acid polypeptide reads, in one-letter code: dTTP/UTP pyrophosphatase (201 aa).

Catalysis depends on D73, which acts as the Proton acceptor.

The protein belongs to the Maf family. YhdE subfamily. It depends on a divalent metal cation as a cofactor.

The protein localises to the cytoplasm. The catalysed reaction is dTTP + H2O = dTMP + diphosphate + H(+). It carries out the reaction UTP + H2O = UMP + diphosphate + H(+). Functionally, nucleoside triphosphate pyrophosphatase that hydrolyzes dTTP and UTP. May have a dual role in cell division arrest and in preventing the incorporation of modified nucleotides into cellular nucleic acids. This Pseudomonas aeruginosa (strain ATCC 15692 / DSM 22644 / CIP 104116 / JCM 14847 / LMG 12228 / 1C / PRS 101 / PAO1) protein is dTTP/UTP pyrophosphatase.